The chain runs to 104 residues: Integration host factor subunit alpha (104 aa).

Belongs to the bacterial histone-like protein family. In terms of assembly, heterodimer of an alpha and a beta chain.

Its function is as follows. This protein is one of the two subunits of integration host factor, a specific DNA-binding protein that functions in genetic recombination as well as in transcriptional and translational control. The protein is Integration host factor subunit alpha of Methylobacterium sp. (strain 4-46).